The primary structure comprises 523 residues: GMP synthase [glutamine-hydrolyzing] (523 aa).

In terms of domain architecture, Glutamine amidotransferase type-1 spans 9 to 198 (PVLVVDYGAQ…LTEIAGLEQN (190 aa)). The active-site Nucleophile is cysteine 86. Catalysis depends on residues histidine 172 and glutamate 174. The 199-residue stretch at 199 to 397 (WTAANIAEEL…LGLPEVIVAR (199 aa)) folds into the GMPS ATP-PPase domain. 227 to 233 (SGGVDSA) serves as a coordination point for ATP.

In terms of assembly, homodimer.

The catalysed reaction is XMP + L-glutamine + ATP + H2O = GMP + L-glutamate + AMP + diphosphate + 2 H(+). It functions in the pathway purine metabolism; GMP biosynthesis; GMP from XMP (L-Gln route): step 1/1. Functionally, catalyzes the synthesis of GMP from XMP. This chain is GMP synthase [glutamine-hydrolyzing], found in Corynebacterium efficiens (strain DSM 44549 / YS-314 / AJ 12310 / JCM 11189 / NBRC 100395).